The sequence spans 108 residues: Small ribosomal subunit protein eS25w (108 aa).

The segment at 1–36 (MAPKKDKVPPPSSKPAKSGGGKQKKKKWSKGKQKEK) is disordered. Positions 22 to 31 (KQKKKKWSKG) are enriched in basic residues.

Belongs to the eukaryotic ribosomal protein eS25 family.

This Arabidopsis thaliana (Mouse-ear cress) protein is Small ribosomal subunit protein eS25w (RPS25E).